The sequence spans 360 residues: D-xylose 1-dehydrogenase [NADP(+)] (360 aa).

This sequence belongs to the Gfo/Idh/MocA family. As to quaternary structure, homotretramer.

The catalysed reaction is D-xylofuranose + NADP(+) = D-xylono-1,4-lactone + NADPH + H(+). NADP-dependent D-xylose dehydrogenase involved in the degradation of D-xylose, a major component of hemicelluloses such as xylan. In addition to D-xylose, oxidizes D-ribose at similar kinetic constants, whereas D-glucose is oxidized with about 70-fold lower catalytic efficiency. This Haloarcula marismortui (strain ATCC 43049 / DSM 3752 / JCM 8966 / VKM B-1809) (Halobacterium marismortui) protein is D-xylose 1-dehydrogenase [NADP(+)] (gfo6).